A 346-amino-acid polypeptide reads, in one-letter code: Flap endonuclease 1 (346 aa).

The N-domain stretch occupies residues 1 to 102 (MGVTELGKLI…LEIEQRKKAK (102 aa)). Asp-31, Asp-84, Glu-156, Glu-158, Asp-177, Asp-179, and Asp-239 together coordinate Mg(2+). The segment at 120 to 261 (DVAKYAKRAI…KALKLIWEFG (142 aa)) is I-domain.

Belongs to the XPG/RAD2 endonuclease family. FEN1 subfamily. As to quaternary structure, interacts with PCNA. PCNA stimulates the nuclease activity without altering cleavage specificity. Mg(2+) serves as cofactor.

Structure-specific nuclease with 5'-flap endonuclease and 5'-3' exonuclease activities involved in DNA replication and repair. During DNA replication, cleaves the 5'-overhanging flap structure that is generated by displacement synthesis when DNA polymerase encounters the 5'-end of a downstream Okazaki fragment. Binds the unpaired 3'-DNA end and kinks the DNA to facilitate 5' cleavage specificity. Cleaves one nucleotide into the double-stranded DNA from the junction in flap DNA, leaving a nick for ligation. Also involved in the base excision repair (BER) pathway. Acts as a genome stabilization factor that prevents flaps from equilibrating into structures that lead to duplications and deletions. Also possesses 5'-3' exonuclease activity on nicked or gapped double-stranded DNA. This chain is Flap endonuclease 1, found in Pyrobaculum calidifontis (strain DSM 21063 / JCM 11548 / VA1).